Reading from the N-terminus, the 470-residue chain is 5-hydroxytryptamine receptor 2A (470 aa).

Topologically, residues 1 to 80 (MDVLCEENTS…LQEKNWSALL (80 aa)) are extracellular. 6 N-linked (GlcNAc...) asparagine glycosylation sites follow: Asn8, Asn38, Asn44, Asn51, Asn54, and Asn75. Residues 81–97 (TAVVIILTIAGNILVIM) traverse the membrane as a helical segment. The Cytoplasmic portion of the chain corresponds to 98-111 (AVSLEKKLQNATNY). Residues 112–137 (FLMSLAIADMLLGFLVMPVSMLTILY) traverse the membrane as a helical segment. Over 138–146 (GYRWPLPSK) the chain is Extracellular. The helical transmembrane segment at 147–171 (LCAVWIYLDVLFSTASIMHLCAISL) threads the bilayer. A disulfide bridge connects residues Cys148 and Cys227. Asp155 serves as a coordination point for serotonin. The DRY motif; important for ligand-induced conformation changes motif lies at 172 to 174 (DRY). Over 172–191 (DRYVAIQNPIHHRRFNSRTK) the chain is Cytoplasmic. The helical transmembrane segment at 192–215 (AFLKIIAVWTISVGISMPIPVFGL) threads the bilayer. Topologically, residues 216-232 (QDDSKVFKEGSCLLADD) are extracellular. Residues 233-258 (NFVLIGSFVSFFIPLTIMVITYFLTI) traverse the membrane as a helical segment. Over 259–321 (KSLQKEATLC…QSISNEQKAC (63 aa)) the chain is Cytoplasmic. Ser280 carries the phosphoserine modification. Residues 322–347 (KVLGIVFFLFVVMWCPFFITNIMAVI) form a helical membrane-spanning segment. Residue Asn342 coordinates serotonin. The cysteines at positions 348 and 352 are disulfide-linked. Topologically, residues 348–355 (CKESCNED) are extracellular. A helical transmembrane segment spans residues 356–381 (VIGALLNVFVWIGYLSSAVNPLVYTL). Residues 375–379 (NPLVY) carry the NPxxY motif; important for ligand-induced conformation changes and signaling motif. Over 382–470 (FNKTYRSAFS…NTVNEKVSCV (89 aa)) the chain is Cytoplasmic. The tract at residues 448 to 470 (GKQHSEDAPADNSNTVNEKVSCV) is disordered. Over residues 458 to 470 (DNSNTVNEKVSCV) the composition is skewed to polar residues. The PDZ-binding motif lies at 468–470 (SCV).

It belongs to the G-protein coupled receptor 1 family. In terms of assembly, interacts (via C-terminus) with MPDZ and PATJ. May interact (via C-terminus) with MPP3, PRDX6, DLG4, DLG1, CASK, APBA1 and MAGI2. Interacts with GRM2 and DRD2; this may affect signaling.

It is found in the cell membrane. Its subcellular location is the cell projection. The protein resides in the dendrite. It localises to the axon. The protein localises to the cytoplasmic vesicle. It is found in the membrane. Its subcellular location is the caveola. The protein resides in the presynapse. G-protein coupled receptor activity is regulated by lipids: oleamide increases HTR2A-mediated activity. Functionally, G-protein coupled receptor for 5-hydroxytryptamine (serotonin). Also functions as a receptor for various drugs and psychoactive substances, including mescaline, psilocybin, 1-(2,5-dimethoxy-4-iodophenyl)-2-aminopropane (DOI) and lysergic acid diethylamide (LSD). Ligand binding causes a conformation change that triggers signaling via guanine nucleotide-binding proteins (G proteins) and modulates the activity of downstream effectors. HTR2A is coupled to G(q)/G(11) G alpha proteins and activates phospholipase C-beta, releasing diacylglycerol (DAG) and inositol 1,4,5-trisphosphate (IP3) second messengers that modulate the activity of phosphatidylinositol 3-kinase and promote the release of Ca(2+) ions from intracellular stores, respectively. Beta-arrestin family members inhibit signaling via G proteins and mediate activation of alternative signaling pathways. Affects neural activity, perception, cognition and mood. Plays a role in the regulation of behavior, including responses to anxiogenic situations and psychoactive substances. Plays a role in intestinal smooth muscle contraction, and may play a role in arterial vasoconstriction. This Sus scrofa (Pig) protein is 5-hydroxytryptamine receptor 2A (HTR2A).